Reading from the N-terminus, the 849-residue chain is uncharacterized protein (849 aa).

A run of 2 helical transmembrane segments spans residues 587–607 (VALG…LGLF) and 620–640 (AGIL…TGDW).

It localises to the cell membrane. This is an uncharacterized protein from Methanocaldococcus jannaschii (strain ATCC 43067 / DSM 2661 / JAL-1 / JCM 10045 / NBRC 100440) (Methanococcus jannaschii).